The sequence spans 386 residues: Epoxyqueuosine reductase (386 aa).

Cob(II)alamin-binding positions include Arg-57, Cys-97, Asp-134, 139-141 (SDR), Ser-152, Asn-155, Ile-158, and Leu-169. Asp-134 (proton donor) is an active-site residue. The 31-residue stretch at 178–208 (FEPDVPIEDMCGSCTKCLDACPTGALVNPGQ) folds into the 4Fe-4S ferredoxin-type domain. Positions 188, 191, 194, 198, and 214 each coordinate [4Fe-4S] cluster. Residue Ser-216 participates in cob(II)alamin binding. The tRNA site is built by Gln-220 and Lys-222. The [4Fe-4S] cluster site is built by Cys-240, Cys-243, and Cys-247. 240-241 (CD) is a cob(II)alamin binding site. Positions 280, 281, 295, 297, and 298 each coordinate tRNA. An HEAT-like PBS-type repeat occupies 333-357 (RGTAAWAIGKIGDPAYAEELEKALE).

The protein belongs to the QueG family. Monomer. The cofactor is cob(II)alamin. Requires [4Fe-4S] cluster as cofactor.

The protein resides in the cytoplasm. It catalyses the reaction epoxyqueuosine(34) in tRNA + AH2 = queuosine(34) in tRNA + A + H2O. Its pathway is tRNA modification; tRNA-queuosine biosynthesis. Its function is as follows. Catalyzes the conversion of epoxyqueuosine (oQ) to queuosine (Q), which is a hypermodified base found in the wobble positions of tRNA(Asp), tRNA(Asn), tRNA(His) and tRNA(Tyr). The sequence is that of Epoxyqueuosine reductase from Bacillus subtilis (strain 168).